The sequence spans 361 residues: MGNIHIQTKSKEYDVHVGKEVLSNLTTIVQNMQPAVSNVMIISDEAVASLHLQTVIDALQVEQHVFSFVVPSGEKEKSFENFYAAHTSALENKLDRNSLILALGGGMIGDLAGFVAASFMRGIRFVQVPTTLLAHDSAVGGKVAINHPLGKNMIGAFHQPEAVVYHTPFLQSLPEKEWRSGYAEVIKHALIGDVELYHWLKEEVQTLADLHDEKLIHILTKAIPVKANVVSQDETEKGVRAHLNFGHTLGHALEKELGYGNITHGDGVAVGMLFAIFLSEQVYKVDLAYEDMKQWFLKYGYPKMPRDLNVERLVQLMKQDKKANAGAIHMVLMQEYGVVNVVSISDETVHIALEAFQKDMV.

NAD(+) contacts are provided by residues 72-77, 130-131, lysine 142, and lysine 151; these read SGEKEK and TT. Residues glutamate 184, histidine 247, and histidine 264 each contribute to the Zn(2+) site.

It belongs to the sugar phosphate cyclases superfamily. Dehydroquinate synthase family. Co(2+) serves as cofactor. Zn(2+) is required as a cofactor. It depends on NAD(+) as a cofactor.

The protein resides in the cytoplasm. The enzyme catalyses 7-phospho-2-dehydro-3-deoxy-D-arabino-heptonate = 3-dehydroquinate + phosphate. The protein operates within metabolic intermediate biosynthesis; chorismate biosynthesis; chorismate from D-erythrose 4-phosphate and phosphoenolpyruvate: step 2/7. Its function is as follows. Catalyzes the conversion of 3-deoxy-D-arabino-heptulosonate 7-phosphate (DAHP) to dehydroquinate (DHQ). The chain is 3-dehydroquinate synthase from Bacillus cereus (strain B4264).